Consider the following 189-residue polypeptide: Large ribosomal subunit protein bL9 (189 aa).

This sequence belongs to the bacterial ribosomal protein bL9 family.

In terms of biological role, binds to the 23S rRNA. This is Large ribosomal subunit protein bL9 from Brucella ovis (strain ATCC 25840 / 63/290 / NCTC 10512).